We begin with the raw amino-acid sequence, 100 residues long: uncharacterized protein (100 aa).

The next 2 membrane-spanning stretches (helical) occupy residues 17–37 (IIIL…SVSF) and 78–98 (MVDK…TIPF).

The protein resides in the endoplasmic reticulum membrane. This is an uncharacterized protein from Saccharomyces cerevisiae (strain ATCC 204508 / S288c) (Baker's yeast).